The primary structure comprises 333 residues: Foldase protein PrsA (333 aa).

Residues 1-21 (MKKRTIATGLVTLLSIVTLAA) form the signal peptide. The N-palmitoyl cysteine moiety is linked to residue C22. C22 is lipidated: S-diacylglycerol cysteine. Positions 144-237 (KPEVTAQVIQ…PVYYIVKITK (94 aa)) constitute a PpiC domain. The interval 296–333 (AASGSGSSGSTTTTTAASSAATTAADDQTTAAETTAAE) is disordered.

This sequence belongs to the PrsA family.

The protein resides in the cell membrane. The enzyme catalyses [protein]-peptidylproline (omega=180) = [protein]-peptidylproline (omega=0). Its function is as follows. Plays a major role in protein secretion by helping the post-translocational extracellular folding of several secreted proteins. This Streptococcus mutans serotype c (strain ATCC 700610 / UA159) protein is Foldase protein PrsA.